Consider the following 1417-residue polypeptide: DNA-directed RNA polymerase subunit beta' (1417 aa).

Zn(2+) is bound by residues C68, C70, C83, and C86. 3 residues coordinate Mg(2+): D458, D460, and D462. Zn(2+) is bound by residues C811, C884, C891, and C894.

The protein belongs to the RNA polymerase beta' chain family. In terms of assembly, the RNAP catalytic core consists of 2 alpha, 1 beta, 1 beta' and 1 omega subunit. When a sigma factor is associated with the core the holoenzyme is formed, which can initiate transcription. It depends on Mg(2+) as a cofactor. Zn(2+) serves as cofactor.

It carries out the reaction RNA(n) + a ribonucleoside 5'-triphosphate = RNA(n+1) + diphosphate. Its function is as follows. DNA-dependent RNA polymerase catalyzes the transcription of DNA into RNA using the four ribonucleoside triphosphates as substrates. The chain is DNA-directed RNA polymerase subunit beta' from Francisella tularensis subsp. holarctica (strain OSU18).